The primary structure comprises 113 residues: TYRO protein tyrosine kinase-binding protein (113 aa).

Residues 1 to 21 form the signal peptide; sequence MGGLEPCSRLLLLPLLLAVSG. Topologically, residues 22–40 are extracellular; it reads LRPVQAQAQSDCSCSTVSP. The chain crosses the membrane as a helical span at residues 41–61; sequence GVLAGIVMGDLVLTVLIALAV. Aspartate 50 is a Ca(2+) binding site. Residues 62 to 113 are Cytoplasmic-facing; the sequence is YFLGRLVPRGRGAAEAATRKQRITETESPYQELQGQRSDVYSDLNTQRPYYK. Residues 75–113 form a disordered region; that stretch reads AEAATRKQRITETESPYQELQGQRSDVYSDLNTQRPYYK. Residues 80–108 enclose the ITAM domain; sequence RKQRITETESPYQELQGQRSDVYSDLNTQ. Residues 87 to 113 show a composition bias toward polar residues; the sequence is TESPYQELQGQRSDVYSDLNTQRPYYK. Tyrosine 91 and tyrosine 102 each carry phosphotyrosine.

This sequence belongs to the TYROBP family. As to quaternary structure, homodimer; disulfide-linked. Homotrimer; disulfide-linked. Homotetramer; disulfide-linked. Homotrimers and homotetramers form when low levels of partner receptors are available and are competitive with assembly with interacting receptors. They may represent alternative oligomerization states or may be intermediates in the receptor assembly process. Binding of a metal cation aids in homooligomerization through coordination of the metal ion by the subunits of the oligomer. Interacts with TREM1. Interacts with TREM2. Interacts with SIRPB1. Interacts with CLECSF5. Interacts with SIGLEC14. Interacts with CD300LB and CD300E. Interacts with CD300C2. Interacts (via ITAM domain) with SYK (via SH2 domains); activates SYK mediating neutrophil and macrophage integrin-mediated activation. Interacts with KLRC2, KIR2DS3 and KIR2DS5. Interacts with CD300H. Interacts with KIR2DS1. Interacts with KLRD1. Interacts with SIGLEC1. Following ligand binding by associated receptors, tyrosine phosphorylated in the ITAM domain which leads to activation of additional tyrosine kinases and subsequent cell activation. Expressed at low levels in the early development of the hematopoietic system and in the promonocytic stage and at high levels in mature monocytes. Expressed in hematological cells and tissues such as peripheral blood leukocytes and spleen. Also found in bone marrow, lymph nodes, placenta, lung and liver. Expressed at lower levels in different parts of the brain especially in the basal ganglia and corpus callosum.

It localises to the cell membrane. Functionally, adapter protein which non-covalently associates with activating receptors found on the surface of a variety of immune cells to mediate signaling and cell activation following ligand binding by the receptors. TYROBP is tyrosine-phosphorylated in the ITAM domain following ligand binding by the associated receptors which leads to activation of additional tyrosine kinases and subsequent cell activation. Also has an inhibitory role in some cells. Non-covalently associates with activating receptors of the CD300 family to mediate cell activation. Also mediates cell activation through association with activating receptors of the CD200R family. Required for neutrophil activation mediated by integrin. Required for the activation of myeloid cells mediated by the CLEC5A/MDL1 receptor. Associates with natural killer (NK) cell receptors such as KIR2DS2 and the KLRD1/KLRC2 heterodimer to mediate NK cell activation. Also enhances trafficking and cell surface expression of NK cell receptors KIR2DS1, KIR2DS2 and KIR2DS4 and ensures their stability at the cell surface. Associates with SIRPB1 to mediate activation of myeloid cells such as monocytes and dendritic cells. Associates with TREM1 to mediate activation of neutrophils and monocytes. Associates with TREM2 on monocyte-derived dendritic cells to mediate up-regulation of chemokine receptor CCR7 and dendritic cell maturation and survival. Association with TREM2 mediates cytokine-induced formation of multinucleated giant cells which are formed by the fusion of macrophages. Stabilizes the TREM2 C-terminal fragment (TREM2-CTF) produced by TREM2 ectodomain shedding which suppresses the release of pro-inflammatory cytokines. In microglia, required with TREM2 for phagocytosis of apoptotic neurons. Required with ITGAM/CD11B in microglia to control production of microglial superoxide ions which promote the neuronal apoptosis that occurs during brain development. Promotes pro-inflammatory responses in microglia following nerve injury which accelerates degeneration of injured neurons. Positively regulates the expression of the IRAK3/IRAK-M kinase and IL10 production by liver dendritic cells and inhibits their T cell allostimulatory ability. Negatively regulates B cell proliferation. Required for CSF1-mediated osteoclast cytoskeletal organization. Positively regulates multinucleation during osteoclast development. In Homo sapiens (Human), this protein is TYRO protein tyrosine kinase-binding protein.